The chain runs to 381 residues: Succinyl-diaminopimelate desuccinylase (381 aa).

Residue H71 coordinates Zn(2+). Residue D73 is part of the active site. D104 provides a ligand contact to Zn(2+). Catalysis depends on E138, which acts as the Proton acceptor. Residues E139, E167, and H353 each coordinate Zn(2+).

This sequence belongs to the peptidase M20A family. DapE subfamily. As to quaternary structure, homodimer. Zn(2+) is required as a cofactor. Co(2+) serves as cofactor.

The enzyme catalyses N-succinyl-(2S,6S)-2,6-diaminopimelate + H2O = (2S,6S)-2,6-diaminopimelate + succinate. It functions in the pathway amino-acid biosynthesis; L-lysine biosynthesis via DAP pathway; LL-2,6-diaminopimelate from (S)-tetrahydrodipicolinate (succinylase route): step 3/3. Functionally, catalyzes the hydrolysis of N-succinyl-L,L-diaminopimelic acid (SDAP), forming succinate and LL-2,6-diaminopimelate (DAP), an intermediate involved in the bacterial biosynthesis of lysine and meso-diaminopimelic acid, an essential component of bacterial cell walls. The sequence is that of Succinyl-diaminopimelate desuccinylase from Shewanella pealeana (strain ATCC 700345 / ANG-SQ1).